A 183-amino-acid polypeptide reads, in one-letter code: Ribosomal RNA small subunit methyltransferase G (183 aa).

S-adenosyl-L-methionine is bound by residues glycine 60, phenylalanine 65, isoleucine 111–glutamate 112, and arginine 125.

Belongs to the methyltransferase superfamily. RNA methyltransferase RsmG family.

Its subcellular location is the cytoplasm. The enzyme catalyses guanosine(527) in 16S rRNA + S-adenosyl-L-methionine = N(7)-methylguanosine(527) in 16S rRNA + S-adenosyl-L-homocysteine. Its function is as follows. Specifically methylates the N7 position of guanine in position 527 of 16S rRNA. The protein is Ribosomal RNA small subunit methyltransferase G of Campylobacter hominis (strain ATCC BAA-381 / DSM 21671 / CCUG 45161 / LMG 19568 / NCTC 13146 / CH001A).